Consider the following 325-residue polypeptide: Heme A synthase (325 aa).

5 helical membrane-spanning segments follow: residues 6–26 (WLAV…FTRL), 88–108 (LVGR…FVVG), 116–136 (LRLC…WYMV), 155–175 (LFCA…PTVI), and 184–204 (LVGC…GLVA). His246 is a heme binding site. 3 helical membrane-spanning segments follow: residues 248–268 (MSAF…FFYD), 275–295 (VFLV…TLLF), and 297–317 (IPID…GICV). His305 lines the heme pocket.

Belongs to the COX15/CtaA family. Type 2 subfamily. Interacts with CtaB. It depends on heme b as a cofactor.

It localises to the cell membrane. It catalyses the reaction Fe(II)-heme o + 2 A + H2O = Fe(II)-heme a + 2 AH2. Its pathway is porphyrin-containing compound metabolism; heme A biosynthesis; heme A from heme O: step 1/1. Functionally, catalyzes the conversion of heme O to heme A by two successive hydroxylations of the methyl group at C8. The first hydroxylation forms heme I, the second hydroxylation results in an unstable dihydroxymethyl group, which spontaneously dehydrates, resulting in the formyl group of heme A. The chain is Heme A synthase from Neorickettsia sennetsu (strain ATCC VR-367 / Miyayama) (Ehrlichia sennetsu).